Reading from the N-terminus, the 126-residue chain is DNA-directed RNA polymerase 35 kDa subunit (126 aa).

Belongs to the poxviridae DNA-directed RNA polymerase 35 kDa subunit family. The DNA-dependent RNA polymerase used for intermediate and late genes expression consists of eight subunits 147 kDa, 133 kDa, 35 kDa, 30 kDa, 22 kDa, 19 kDa, 18 kDa and 7 kDa totalling more than 500 kDa in mass. The same holoenzyme, with the addition of the transcription-specificity factor RAP94, is used for early gene expression.

The protein localises to the virion. The enzyme catalyses RNA(n) + a ribonucleoside 5'-triphosphate = RNA(n+1) + diphosphate. Part of the DNA-dependent RNA polymerase which catalyzes the transcription of viral DNA into RNA using the four ribonucleoside triphosphates as substrates. Responsible for the transcription of early, intermediate and late genes. DNA-dependent RNA polymerase associates with the early transcription factor (ETF) thereby allowing the early genes transcription. Late transcription, and probably also intermediate transcription, require newly synthesized RNA polymerase. The sequence is that of DNA-directed RNA polymerase 35 kDa subunit (RPO35) from Ovis aries (Sheep).